The following is a 209-amino-acid chain: Transmembrane domain-containing protein TMIGD3 (209 aa).

The N-terminal stretch at 1–15 (MEFLLLLSLALFSDA) is a signal peptide. The chain crosses the membrane as a helical span at residues 152-172 (SILIICILITSLGIIFIISHL). The interval 179–201 (QRNREVTGKSISRNPQASQGPSM) is disordered. The span at 187-201 (KSISRNPQASQGPSM) shows a compositional bias: polar residues.

The protein resides in the membrane. In Mus musculus (Mouse), this protein is Transmembrane domain-containing protein TMIGD3 (Tmigd3).